The chain runs to 331 residues: MDRAAVAKMGAVASASVCALVGGVVLAQYIFTMKKKTGRKTKIIEMMPEFQKKTVHIKDPGRVEEIICGLIKGGAAKLQIITDFDMTLSRFSYNGKRCPTCHNIIDNSKLITEECRKKLLQLKETYYAIEIDPALTIEEKYPYMVEWYNKSHALLIEQGLQKDKLAEVVRESDVMLKEGYENFFDKLSEHNIPVFIFSAGIGDILEEVIHQAGVYHSNVKVVSNFMDFDENGILKGFKGELIHVYNKHDGALKNTEYFKQLKDNSNIILLGDSQGDLSMADGVANVEHILKIGYLNDKVDELLEKYMDSYDIVLVKDESLEVANSILQKIL.

Asp-83 (nucleophile) is an active-site residue. Residues Asp-83 and Asp-85 each coordinate Mg(2+). Asp-85 (proton donor) is an active-site residue. Glu-130 provides a ligand contact to CMP. Residues Glu-130 and Ser-151 each coordinate N(7)-methyl-GMP. Substrate contacts are provided by residues 198 to 199 (SA) and Lys-247. Position 272 (Asp-272) interacts with Mg(2+).

It belongs to the pyrimidine 5'-nucleotidase family.

The protein localises to the cytoplasm. The enzyme catalyses N(7)-methyl-GMP + H2O = N(7)-methylguanosine + phosphate. It carries out the reaction a ribonucleoside 5'-phosphate + H2O = a ribonucleoside + phosphate. Its function is as follows. Nucleotidase which shows specific activity towards cytidine monophosphate (CMP) and 7-methylguanosine monophosphate (m(7)GMP). CMP seems to be the preferred substrate. This Gallus gallus (Chicken) protein is Cytosolic 5'-nucleotidase 3A (NT5C3A).